Consider the following 185-residue polypeptide: Ribosome-recycling factor (185 aa).

Belongs to the RRF family.

The protein localises to the cytoplasm. Its function is as follows. Responsible for the release of ribosomes from messenger RNA at the termination of protein biosynthesis. May increase the efficiency of translation by recycling ribosomes from one round of translation to another. This chain is Ribosome-recycling factor, found in Clostridium beijerinckii (strain ATCC 51743 / NCIMB 8052) (Clostridium acetobutylicum).